Here is a 130-residue protein sequence, read N- to C-terminus: Transcription antitermination protein NusB (130 aa).

The protein belongs to the NusB family.

Its function is as follows. Involved in transcription antitermination. Required for transcription of ribosomal RNA (rRNA) genes. Binds specifically to the boxA antiterminator sequence of the ribosomal RNA (rrn) operons. The sequence is that of Transcription antitermination protein NusB from Bacillus cereus (strain ATCC 10987 / NRS 248).